We begin with the raw amino-acid sequence, 219 residues long: MSHYRQRFLQLALDSNALCFGEFTLKSGRISPYFFNAGHFNSGAKTAALAQCYADAIDAANMNFDLVFGPAYKGIPLATALACEYAQRERDLLLTFNRKEVKNHGEGGTLIGAPLNGRKILIIDDVITAGTAIREVLRIIRNAGGTPTGVAVALNRQEIASETNRQSSVQALMAETGIPVVAIATLNDLLAFVEENASLAKFYEPLLAYKTHYGTEAPD.

A 5-phospho-alpha-D-ribose 1-diphosphate-binding site is contributed by Lys26. Phe34–Phe35 provides a ligand contact to orotate. Residues Tyr72–Lys73, Arg98, Lys99, Lys102, His104, and Asp124–Ala132 contribute to the 5-phospho-alpha-D-ribose 1-diphosphate site. Orotate contacts are provided by Thr128 and Arg156.

This sequence belongs to the purine/pyrimidine phosphoribosyltransferase family. PyrE subfamily. As to quaternary structure, homodimer. Requires Mg(2+) as cofactor.

It carries out the reaction orotidine 5'-phosphate + diphosphate = orotate + 5-phospho-alpha-D-ribose 1-diphosphate. The protein operates within pyrimidine metabolism; UMP biosynthesis via de novo pathway; UMP from orotate: step 1/2. Its function is as follows. Catalyzes the transfer of a ribosyl phosphate group from 5-phosphoribose 1-diphosphate to orotate, leading to the formation of orotidine monophosphate (OMP). This chain is Orotate phosphoribosyltransferase, found in Xylella fastidiosa (strain Temecula1 / ATCC 700964).